Here is a 334-residue protein sequence, read N- to C-terminus: Chorismatase (334 aa).

Residues Tyr-143, Arg-150, Tyr-203, and Arg-216 each coordinate substrate. Residue Glu-328 is the Proton acceptor of the active site.

The protein belongs to the FkbO/Hyg5 family. In terms of assembly, monomer.

The catalysed reaction is chorismate + H2O = (3R,4R)-3,4-dihydroxy-3,4-dihydrobenzoate + pyruvate. In terms of biological role, involved in the biosynthesis of the macrocyclic amino acid-linked polyketides rapamycin which is a potent immunosuppressant that prevents T-cell proliferation through initial binding to the immunophilin FKBP12. Catalyzes the hydrolysis of chorismate via a 1,4-conjugate elimination of water to yield (4R,5R)-4,5-dihydroxycyclohexa-1,5-dienecarboxylic acid (DCDC). The sequence is that of Chorismatase (rapK) from Streptomyces rapamycinicus (strain ATCC 29253 / DSM 41530 / NRRL 5491 / AYB-994) (Streptomyces hygroscopicus (strain ATCC 29253)).